We begin with the raw amino-acid sequence, 142 residues long: Nucleoside diphosphate kinase (142 aa).

ATP-binding residues include Lys11, Phe59, Arg87, Thr93, Arg104, and Asn114. His117 serves as the catalytic Pros-phosphohistidine intermediate.

It belongs to the NDK family. As to quaternary structure, homotetramer. Mg(2+) is required as a cofactor.

It is found in the cytoplasm. The enzyme catalyses a 2'-deoxyribonucleoside 5'-diphosphate + ATP = a 2'-deoxyribonucleoside 5'-triphosphate + ADP. The catalysed reaction is a ribonucleoside 5'-diphosphate + ATP = a ribonucleoside 5'-triphosphate + ADP. Major role in the synthesis of nucleoside triphosphates other than ATP. The ATP gamma phosphate is transferred to the NDP beta phosphate via a ping-pong mechanism, using a phosphorylated active-site intermediate. The polypeptide is Nucleoside diphosphate kinase (Dechloromonas aromatica (strain RCB)).